The primary structure comprises 1430 residues: Gag-Pol polyprotein (1430 aa).

Glycine 2 carries N-myristoyl glycine; by host lipidation. An interaction with Gp41 region spans residues 7-31 (VLSGGKLDAWEKIRLRPGGKKKYKL). Residues 8 to 43 (LSGGKLDAWEKIRLRPGGKKKYKLKHLVWASRELER) form an interaction with host CALM1 region. Residues 12–19 (KLDAWEKI) form an interaction with host AP3D1 region. Residues 14-33 (DAWEKIRLRPGGKKKYKLKH) form an interaction with membrane phosphatidylinositol 4,5-bisphosphate and RNA region. A Nuclear export signal motif is present at residues 16–22 (WEKIRLR). The Nuclear localization signal signature appears at 26 to 32 (KKKYKLK). An interaction with membrane phosphatidylinositol 4,5-bisphosphate region spans residues 73 to 77 (EEIKS). Phosphotyrosine; by host is present on tyrosine 128. The interval 185–223 (NTVGGHQAAMQMLKDTINDEAAEWDRLHPVHAGPIPPGQ) is interaction with human PPIA/CYPA and NUP153. The tract at residues 273–359 (YSPVSILDIR…GGPSHKARIL (87 aa)) is dimerization/Multimerization of capsid protein p24. 2 consecutive CCHC-type zinc fingers follow at residues 385–402 (VKCFNCGKEGHIARNCRA) and 406–423 (KGCWKCGKEGHQMKDCTE). Residues 439–480 (EAREFSSEQTRANSPTSRELRVRGGDNPLSEAGDQRQGTEPS) form a disordered region. Over residues 445-455 (SEQTRANSPTS) the composition is skewed to polar residues. Positions 484–488 (PQITL) are dimerization of protease. The Peptidase A2 domain maps to 503–572 (REALLDTGAD…TPVNIIGRNL (70 aa)). Catalysis depends on aspartate 508, which acts as the For protease activity; shared with dimeric partner. Dimerization of protease regions lie at residues 532–538 (GIGGFIK) and 571–583 (NLLTQIGCTLNFP). Residues 626–816 (EGKISKIGPE…PPFLWMGYEL (191 aa)) enclose the Reverse transcriptase domain. Mg(2+) contacts are provided by aspartate 692, aspartate 767, and aspartate 768. Residues 809–817 (FLWMGYELH) are RT 'primer grip'. A Tryptophan repeat motif motif is present at residues 980–996 (WETWWTEYWQATWIPEW). One can recognise an RNase H type-1 domain in the interval 1016 to 1139 (IVGAETFYVD…VDKLVSAGIR (124 aa)). The Mg(2+) site is built by aspartate 1025, glutamate 1060, aspartate 1080, and aspartate 1131. The Integrase-type zinc finger occupies 1145–1186 (DGIDKAQEEHEKYHNNWRAMASDFNLPPIVAKEIVASCDKCQ). Histidine 1154, histidine 1158, cysteine 1182, and cysteine 1185 together coordinate Zn(2+). The 151-residue stretch at 1196 to 1346 (VDCSPGIWQL…SAGERIVDII (151 aa)) folds into the Integrase catalytic domain. Residues aspartate 1206, aspartate 1258, and glutamate 1294 each contribute to the Mg(2+) site. The segment at residues 1365–1412 (FRVYYRDSREPIWKGPAKLLWKGEGAVVIQDNSEIKVVPRRKAKIIRD) is a DNA-binding region (integrase-type).

As to quaternary structure, homotrimer; further assembles as hexamers of trimers. Interacts with gp41 (via C-terminus). Interacts with host CALM1; this interaction induces a conformational change in the Matrix protein, triggering exposure of the myristate group. Interacts with host AP3D1; this interaction allows the polyprotein trafficking to multivesicular bodies during virus assembly. Part of the pre-integration complex (PIC) which is composed of viral genome, matrix protein, Vpr and integrase. Homodimer; the homodimer further multimerizes as homohexamers or homopentamers. Interacts with human PPIA/CYPA; This interaction stabilizes the capsid. Interacts with human NUP153. Interacts with host PDZD8; this interaction stabilizes the capsid. Interacts with monkey TRIM5; this interaction destabilizes the capsid. In terms of assembly, homodimer, whose active site consists of two apposed aspartic acid residues. As to quaternary structure, heterodimer of p66 RT and p51 RT (RT p66/p51). Heterodimerization of RT is essential for DNA polymerase activity. The overall folding of the subdomains is similar in p66 RT and p51 RT but the spatial arrangements of the subdomains are dramatically different. Homotetramer; may further associate as a homohexadecamer. Part of the pre-integration complex (PIC) which is composed of viral genome, matrix protein, Vpr and integrase. Interacts with human SMARCB1/INI1 and human PSIP1/LEDGF isoform 1. Interacts with human KPNA3; this interaction might play a role in nuclear import of the pre-integration complex. Interacts with human NUP153; this interaction might play a role in nuclear import of the pre-integration complex. The cofactor is Mg(2+). Post-translationally, specific enzymatic cleavages by the viral protease yield mature proteins. The protease is released by autocatalytic cleavage. The polyprotein is cleaved during and after budding, this process is termed maturation. Proteolytic cleavage of p66 RT removes the RNase H domain to yield the p51 RT subunit. Nucleocapsid protein p7 might be further cleaved after virus entry. In terms of processing, tyrosine phosphorylated presumably in the virion by a host kinase. Phosphorylation is apparently not a major regulator of membrane association. Phosphorylated possibly by host MAPK1; this phosphorylation is necessary for Pin1-mediated virion uncoating. Post-translationally, methylated by host PRMT6, impairing its function by reducing RNA annealing and the initiation of reverse transcription.

It localises to the host cell membrane. It is found in the host endosome. Its subcellular location is the host multivesicular body. The protein resides in the virion membrane. The protein localises to the host nucleus. It localises to the host cytoplasm. It is found in the virion. It catalyses the reaction Specific for a P1 residue that is hydrophobic, and P1' variable, but often Pro.. It carries out the reaction Endohydrolysis of RNA in RNA/DNA hybrids. Three different cleavage modes: 1. sequence-specific internal cleavage of RNA. Human immunodeficiency virus type 1 and Moloney murine leukemia virus enzymes prefer to cleave the RNA strand one nucleotide away from the RNA-DNA junction. 2. RNA 5'-end directed cleavage 13-19 nucleotides from the RNA end. 3. DNA 3'-end directed cleavage 15-20 nucleotides away from the primer terminus.. The catalysed reaction is 3'-end directed exonucleolytic cleavage of viral RNA-DNA hybrid.. The enzyme catalyses DNA(n) + a 2'-deoxyribonucleoside 5'-triphosphate = DNA(n+1) + diphosphate. Protease: The viral protease is inhibited by many synthetic protease inhibitors (PIs), such as amprenavir, atazanavir, indinavir, loprinavir, nelfinavir, ritonavir and saquinavir. Use of protease inhibitors in tritherapy regimens permit more ambitious therapeutic strategies. Reverse transcriptase/ribonuclease H: RT can be inhibited either by nucleoside RT inhibitors (NRTIs) or by non nucleoside RT inhibitors (NNRTIs). NRTIs act as chain terminators, whereas NNRTIs inhibit DNA polymerization by binding a small hydrophobic pocket near the RT active site and inducing an allosteric change in this region. Classical NRTIs are abacavir, adefovir (PMEA), didanosine (ddI), lamivudine (3TC), stavudine (d4T), tenofovir (PMPA), zalcitabine (ddC), and zidovudine (AZT). Classical NNRTIs are atevirdine (BHAP U-87201E), delavirdine, efavirenz (DMP-266), emivirine (I-EBU), and nevirapine (BI-RG-587). The tritherapies used as a basic effective treatment of AIDS associate two NRTIs and one NNRTI. Functionally, mediates, with Gag polyprotein, the essential events in virion assembly, including binding the plasma membrane, making the protein-protein interactions necessary to create spherical particles, recruiting the viral Env proteins, and packaging the genomic RNA via direct interactions with the RNA packaging sequence (Psi). Gag-Pol polyprotein may regulate its own translation, by the binding genomic RNA in the 5'-UTR. At low concentration, the polyprotein would promote translation, whereas at high concentration, the polyprotein would encapsidate genomic RNA and then shut off translation. In terms of biological role, targets the polyprotein to the plasma membrane via a multipartite membrane-binding signal, that includes its myristoylated N-terminus. Matrix protein is part of the pre-integration complex. Implicated in the release from host cell mediated by Vpu. Binds to RNA. Its function is as follows. Forms the conical core that encapsulates the genomic RNA-nucleocapsid complex in the virion. Most core are conical, with only 7% tubular. The core is constituted by capsid protein hexamer subunits. The core is disassembled soon after virion entry. Host restriction factors such as TRIM5-alpha or TRIMCyp bind retroviral capsids and cause premature capsid disassembly, leading to blocks in reverse transcription. Capsid restriction by TRIM5 is one of the factors which restricts HIV-1 to the human species. Host PIN1 apparently facilitates the virion uncoating. On the other hand, interactions with PDZD8 or CYPA stabilize the capsid. Encapsulates and protects viral dimeric unspliced genomic RNA (gRNA). Binds these RNAs through its zinc fingers. Acts as a nucleic acid chaperone which is involved in rearangement of nucleic acid secondary structure during gRNA retrotranscription. Also facilitates template switch leading to recombination. As part of the polyprotein, participates in gRNA dimerization, packaging, tRNA incorporation and virion assembly. Functionally, aspartyl protease that mediates proteolytic cleavages of Gag and Gag-Pol polyproteins during or shortly after the release of the virion from the plasma membrane. Cleavages take place as an ordered, step-wise cascade to yield mature proteins. This process is called maturation. Displays maximal activity during the budding process just prior to particle release from the cell. Also cleaves Nef and Vif, probably concomitantly with viral structural proteins on maturation of virus particles. Hydrolyzes host EIF4GI and PABP1 in order to shut off the capped cellular mRNA translation. The resulting inhibition of cellular protein synthesis serves to ensure maximal viral gene expression and to evade host immune response. Also mediates cleavage of host YTHDF3. Mediates cleavage of host CARD8, thereby activating the CARD8 inflammasome, leading to the clearance of latent HIV-1 in patient CD4(+) T-cells after viral reactivation; in contrast, HIV-1 can evade CARD8-sensing when its protease remains inactive in infected cells prior to viral budding. In terms of biological role, multifunctional enzyme that converts the viral RNA genome into dsDNA in the cytoplasm, shortly after virus entry into the cell. This enzyme displays a DNA polymerase activity that can copy either DNA or RNA templates, and a ribonuclease H (RNase H) activity that cleaves the RNA strand of RNA-DNA heteroduplexes in a partially processive 3' to 5' endonucleasic mode. Conversion of viral genomic RNA into dsDNA requires many steps. A tRNA(3)-Lys binds to the primer-binding site (PBS) situated at the 5'-end of the viral RNA. RT uses the 3' end of the tRNA primer to perform a short round of RNA-dependent minus-strand DNA synthesis. The reading proceeds through the U5 region and ends after the repeated (R) region which is present at both ends of viral RNA. The portion of the RNA-DNA heteroduplex is digested by the RNase H, resulting in a ssDNA product attached to the tRNA primer. This ssDNA/tRNA hybridizes with the identical R region situated at the 3' end of viral RNA. This template exchange, known as minus-strand DNA strong stop transfer, can be either intra- or intermolecular. RT uses the 3' end of this newly synthesized short ssDNA to perform the RNA-dependent minus-strand DNA synthesis of the whole template. RNase H digests the RNA template except for two polypurine tracts (PPTs) situated at the 5'-end and near the center of the genome. It is not clear if both polymerase and RNase H activities are simultaneous. RNase H probably can proceed both in a polymerase-dependent (RNA cut into small fragments by the same RT performing DNA synthesis) and a polymerase-independent mode (cleavage of remaining RNA fragments by free RTs). Secondly, RT performs DNA-directed plus-strand DNA synthesis using the PPTs that have not been removed by RNase H as primers. PPTs and tRNA primers are then removed by RNase H. The 3' and 5' ssDNA PBS regions hybridize to form a circular dsDNA intermediate. Strand displacement synthesis by RT to the PBS and PPT ends produces a blunt ended, linear dsDNA copy of the viral genome that includes long terminal repeats (LTRs) at both ends. Its function is as follows. Catalyzes viral DNA integration into the host chromosome, by performing a series of DNA cutting and joining reactions. This enzyme activity takes place after virion entry into a cell and reverse transcription of the RNA genome in dsDNA. The first step in the integration process is 3' processing. This step requires a complex comprising the viral genome, matrix protein, Vpr and integrase. This complex is called the pre-integration complex (PIC). The integrase protein removes 2 nucleotides from each 3' end of the viral DNA, leaving recessed CA OH's at the 3' ends. In the second step, the PIC enters cell nucleus. This process is mediated through integrase and Vpr proteins, and allows the virus to infect a non dividing cell. This ability to enter the nucleus is specific of lentiviruses, other retroviruses cannot and rely on cell division to access cell chromosomes. In the third step, termed strand transfer, the integrase protein joins the previously processed 3' ends to the 5' ends of strands of target cellular DNA at the site of integration. The 5'-ends are produced by integrase-catalyzed staggered cuts, 5 bp apart. A Y-shaped, gapped, recombination intermediate results, with the 5'-ends of the viral DNA strands and the 3' ends of target DNA strands remaining unjoined, flanking a gap of 5 bp. The last step is viral DNA integration into host chromosome. This involves host DNA repair synthesis in which the 5 bp gaps between the unjoined strands are filled in and then ligated. Since this process occurs at both cuts flanking the HIV genome, a 5 bp duplication of host DNA is produced at the ends of HIV-1 integration. Alternatively, Integrase may catalyze the excision of viral DNA just after strand transfer, this is termed disintegration. The chain is Gag-Pol polyprotein (gag-pol) from Homo sapiens (Human).